The primary structure comprises 509 residues: Maturase K (509 aa).

This sequence belongs to the intron maturase 2 family. MatK subfamily.

Its subcellular location is the plastid. It is found in the chloroplast. Functionally, usually encoded in the trnK tRNA gene intron. Probably assists in splicing its own and other chloroplast group II introns. In Eucommia ulmoides (Hardy rubber tree), this protein is Maturase K.